A 151-amino-acid polypeptide reads, in one-letter code: MTDLSIAVTRLPHGADLPLPAYATEHAAGMDLLAAVAEPVILAPGERRLIPTGLAIALPDGYEAQVRPRSGLALKHGITLLNSPGTIDADYRGEVGVILANLGADPFTVERGMRIAQMVIARYARAAWDVVDSLPASARGSGGFGSTGTRG.

Substrate-binding positions include 69–71, N82, and 86–88; these read RSG and TID.

It belongs to the dUTPase family. The cofactor is Mg(2+).

It catalyses the reaction dUTP + H2O = dUMP + diphosphate + H(+). Its pathway is pyrimidine metabolism; dUMP biosynthesis; dUMP from dCTP (dUTP route): step 2/2. Functionally, this enzyme is involved in nucleotide metabolism: it produces dUMP, the immediate precursor of thymidine nucleotides and it decreases the intracellular concentration of dUTP so that uracil cannot be incorporated into DNA. This chain is Deoxyuridine 5'-triphosphate nucleotidohydrolase, found in Rhodospirillum centenum (strain ATCC 51521 / SW).